The following is a 351-amino-acid chain: UDP-3-O-acylglucosamine N-acyltransferase 1 (351 aa).

The active-site Proton acceptor is the His237.

The protein belongs to the transferase hexapeptide repeat family. LpxD subfamily. As to quaternary structure, homotrimer.

The catalysed reaction is a UDP-3-O-[(3R)-3-hydroxyacyl]-alpha-D-glucosamine + a (3R)-hydroxyacyl-[ACP] = a UDP-2-N,3-O-bis[(3R)-3-hydroxyacyl]-alpha-D-glucosamine + holo-[ACP] + H(+). Its pathway is bacterial outer membrane biogenesis; LPS lipid A biosynthesis. In terms of biological role, catalyzes the N-acylation of UDP-3-O-acylglucosamine using 3-hydroxyacyl-ACP as the acyl donor. Is involved in the biosynthesis of lipid A, a phosphorylated glycolipid that anchors the lipopolysaccharide to the outer membrane of the cell. The sequence is that of UDP-3-O-acylglucosamine N-acyltransferase 1 from Legionella pneumophila (strain Paris).